A 776-amino-acid polypeptide reads, in one-letter code: MDHARAALSNLFSVEPMSYTRFSIARQTDGDNSHVEMKLSADDEEGGDIERPEHMHVSMAQPQRNGKRLCFLVIAAVLLLLIGFLIGYLSYRGRIELAARCQDGSGGCEITPTASYLVDGEGTVEEEIQGPPVIFWPELKAMLSKKLSAKNLVDNLRWRVGVDSFEAGEAEDTNMATYIHEEFRNFLDKVWNDEHYIKLQVRGSTKNQVSISINGKEEILETPDAIVAYSESGSVSGKPVYVNYGLKKDFEIIQKVVASLNGTIVIVRAGKITLAEKVANAKEAGAAGVLMYVDSLMYGITDTLIPFGHAHLGTGDPYTPGFPSFNHTQFPPVESSGLPHIAVQTISSSAAARLFSKMDGDTCSEGWKGAIHSCKVTTKQESQIMVKLDVNNSMKDRKILNIFGAIQGFEEPDRYVVIGAQRDSWGPGVAKAGTGTAILLELARVISDIVKNEGYKPRRSIIFASWSAGDYGAVGATEWLEGYSAMLHAKAFTYISLDAPVLGASHVKISASPLLYMLLGSIMKGVKNPAAVSESLYNRLGPDWVKAVVPLGLDNAAFPFLAYSGIPVLSFGFYNKDEEYRFLDTKGDTLENLRKIDNLDALLAAAAEVAGQAALRLTHDHELFLDIGRYSEELLAYQEEFLPYIKEVRELGLTLDWLFFARGDFQRAVTALRRDIANSDGENRVIRRALNDRMMKVEYDFLSPYLSPKDVPFRHIFFGKGPHTLRSLVEHLQLLKTNRSSVDLNLLREQLALATWTIKGAANALGGDIWETDNEF.

At 1–70 (MDHARAALSN…QPQRNGKRLC (70 aa)) the chain is on the cytoplasmic side. Residues 19–22 (YTRF) carry the Endocytosis signal motif. Ser23 bears the Phosphoserine mark. Cys70 carries the S-palmitoyl cysteine lipid modification. A helical; Signal-anchor for type II membrane protein transmembrane segment spans residues 71 to 91 (FLVIAAVLLLLIGFLIGYLSY). At 92–776 (RGRIELAARC…GDIWETDNEF (685 aa)) the chain is on the extracellular side. The PA domain occupies 230-322 (SESGSVSGKP…GTGDPYTPGF (93 aa)). N-linked (GlcNAc...) asparagine glycosylation is found at Asn261, Asn326, and Asn391. A ligand-binding region spans residues 586–776 (KGDTLENLRK…GDIWETDNEF (191 aa)). A Cell attachment site motif is present at residues 662–664 (RGD). An N-linked (GlcNAc...) asparagine glycan is attached at Asn738.

It belongs to the peptidase M28 family. M28B subfamily. Homodimer; disulfide-linked. Binds one transferrin molecule per subunit. Stearoylated. Stearoylation does not affect iron uptake. In terms of processing, N- and O-glycosylated, phosphorylated and palmitoylated.

The protein localises to the cell membrane. The protein resides in the melanosome. Functionally, cellular uptake of iron occurs via receptor-mediated endocytosis of ligand-occupied transferrin receptor into specialized endosomes. Endosomal acidification leads to iron release. The apotransferrin-receptor complex is then recycled to the cell surface with a return to neutral pH and the concomitant loss of affinity of apotransferrin for its receptor. Transferrin receptor is necessary for development of erythrocytes and the nervous system. Acts as a lipid sensor that regulates mitochondrial fusion by regulating activation of the JNK pathway. When dietary levels of stearate (C18:0) are low, promotes activation of the JNK pathway, resulting in HUWE1-mediated ubiquitination and subsequent degradation of the mitofusin MFN2 and inhibition of mitochondrial fusion. When dietary levels of stearate (C18:0) are high, TFRC stearoylation inhibits activation of the JNK pathway and thus degradation of the mitofusin MFN2. Mediates uptake of NICOL1 into fibroblasts where it may regulate extracellular matrix production. This chain is Transferrin receptor protein 1 (TFRC), found in Gallus gallus (Chicken).